A 170-amino-acid chain; its full sequence is Guided entry of tail-anchored proteins factor 1 (170 aa).

Topologically, residues 1-6 (MAAGFN) are lumenal. The helical transmembrane segment at 7 to 27 (WFLVLSSVFLCNLVKTFLPSI) threads the bilayer. Residues 28-96 (SSFLSKIFHK…KSRTAQQAKM (69 aa)) are Cytoplasmic-facing. Residues 35-93 (FHKDADQEMEMRTEIQNMKMELSTISMMDEFARYARLERKINKMTDQLKTLVKSRTAQQ) are interaction with GET3/TRC40. Residues 61-91 (MMDEFARYARLERKINKMTDQLKTLVKSRTA) adopt a coiled-coil conformation. Residues 97–117 (KWIVNIAFYILQAALMISLIL) traverse the membrane as a helical segment. At 118–137 (KYYADPVTVVPSKWIAPLER) the chain is on the lumenal side. A helical transmembrane segment spans residues 138–158 (LVAFPSGVAGGVGITCWLVVC). Residues 159 to 170 (NKVVALILQAVS) are Cytoplasmic-facing.

It belongs to the WRB/GET1 family. In terms of assembly, component of the Golgi to ER traffic (GET) complex, which is composed of GET1/WRB, CAMLG/GET2 and GET3/TRC40. Within the complex, GET1 and CAMLG form a heterotetramer which is stabilized by phosphatidylinositol binding and which binds to the GET3 homodimer.

It is found in the endoplasmic reticulum membrane. Functionally, required for the post-translational delivery of tail-anchored (TA) proteins to the endoplasmic reticulum (ER). Together with CAMLG/GET2, acts as a membrane receptor for soluble GET3/TRC40, which recognizes and selectively binds the transmembrane domain of TA proteins in the cytosol. Required to ensure correct topology and ER insertion of CAMLG. In Danio rerio (Zebrafish), this protein is Guided entry of tail-anchored proteins factor 1.